The primary structure comprises 227 residues: Octanoyltransferase (227 aa).

The BPL/LPL catalytic domain maps to 34-212 (RQREDGLMLL…AFAEVFPVTW (179 aa)). Residues 76–83 (RGGEVTYH), 143–145 (AIA), and 156–158 (GFA) contribute to the substrate site. Cys-174 serves as the catalytic Acyl-thioester intermediate.

Belongs to the LipB family.

The protein localises to the cytoplasm. It carries out the reaction octanoyl-[ACP] + L-lysyl-[protein] = N(6)-octanoyl-L-lysyl-[protein] + holo-[ACP] + H(+). Its pathway is protein modification; protein lipoylation via endogenous pathway; protein N(6)-(lipoyl)lysine from octanoyl-[acyl-carrier-protein]: step 1/2. In terms of biological role, catalyzes the transfer of endogenously produced octanoic acid from octanoyl-acyl-carrier-protein onto the lipoyl domains of lipoate-dependent enzymes. Lipoyl-ACP can also act as a substrate although octanoyl-ACP is likely to be the physiological substrate. The chain is Octanoyltransferase from Synechocystis sp. (strain ATCC 27184 / PCC 6803 / Kazusa).